A 289-amino-acid chain; its full sequence is Beta-lactamase Toho-2 (289 aa).

An N-terminal signal peptide occupies residues 1 to 28 (MVTKRVQRMMSAAAACIPLLLGSPTLYA). The Acyl-ester intermediate role is filled by serine 73. Residue 235–237 (KTG) coordinates substrate.

The protein belongs to the class-A beta-lactamase family.

The catalysed reaction is a beta-lactam + H2O = a substituted beta-amino acid. Inhibited 16-fold better by the beta-lactamase inhibitor tazobactam than by clavulanic acid. Functionally, hydrolyzes beta-lactam antibiotics such as penicillin G, carbenicillin, cephaloridine, cefoxitin, cefotaxime, ceftazidime, and aztreonam. Has especially increased relative hydrolysis rates for cephalothin, cephaloridine, cefotaxime and ceftizoxime. The chain is Beta-lactamase Toho-2 (bla) from Escherichia coli.